Here is a 227-residue protein sequence, read N- to C-terminus: NADH-quinone oxidoreductase subunit C (227 aa).

It belongs to the complex I 30 kDa subunit family. As to quaternary structure, NDH-1 is composed of 14 different subunits. Subunits NuoB, C, D, E, F, and G constitute the peripheral sector of the complex.

The protein localises to the cell inner membrane. It catalyses the reaction a quinone + NADH + 5 H(+)(in) = a quinol + NAD(+) + 4 H(+)(out). Functionally, NDH-1 shuttles electrons from NADH, via FMN and iron-sulfur (Fe-S) centers, to quinones in the respiratory chain. The immediate electron acceptor for the enzyme in this species is believed to be ubiquinone. Couples the redox reaction to proton translocation (for every two electrons transferred, four hydrogen ions are translocated across the cytoplasmic membrane), and thus conserves the redox energy in a proton gradient. This Legionella pneumophila (strain Corby) protein is NADH-quinone oxidoreductase subunit C.